The primary structure comprises 331 residues: Ubiquinone biosynthesis protein UbiU (331 aa).

[4Fe-4S] cluster is bound by residues cysteine 169, cysteine 176, cysteine 193, and cysteine 232.

The protein belongs to the peptidase U32 family. UbiU subfamily. In terms of assembly, forms a heterodimer with UbiV. It depends on [4Fe-4S] cluster as a cofactor.

The protein operates within cofactor biosynthesis; ubiquinone biosynthesis. Required for O(2)-independent ubiquinone (coenzyme Q) biosynthesis. Together with UbiV, is essential for the C6-hydroxylation reaction in the oxygen-independent ubiquinone biosynthesis pathway. The sequence is that of Ubiquinone biosynthesis protein UbiU from Escherichia coli (strain K12).